The chain runs to 82 residues: Small ribosomal subunit protein uS17 (82 aa).

This sequence belongs to the universal ribosomal protein uS17 family. Part of the 30S ribosomal subunit.

Functionally, one of the primary rRNA binding proteins, it binds specifically to the 5'-end of 16S ribosomal RNA. The chain is Small ribosomal subunit protein uS17 from Xanthobacter autotrophicus (strain ATCC BAA-1158 / Py2).